Reading from the N-terminus, the 68-residue chain is Large ribosomal subunit protein bL35 (68 aa).

This sequence belongs to the bacterial ribosomal protein bL35 family.

This is Large ribosomal subunit protein bL35 from Aster yellows witches'-broom phytoplasma (strain AYWB).